A 59-amino-acid chain; its full sequence is UPF0434 protein VS_2060 (59 aa).

This sequence belongs to the UPF0434 family.

The polypeptide is UPF0434 protein VS_2060 (Vibrio atlanticus (strain LGP32) (Vibrio splendidus (strain Mel32))).